The sequence spans 188 residues: dCTP deaminase, dUMP-forming (188 aa).

DCTP contacts are provided by residues 101–106, Asp-119, 127–129, Gln-148, Tyr-162, and Gln-174; these read KSSLGR and TLE. Glu-129 functions as the Proton donor/acceptor in the catalytic mechanism.

It belongs to the dCTP deaminase family. Homotrimer.

The enzyme catalyses dCTP + 2 H2O = dUMP + NH4(+) + diphosphate. Its pathway is pyrimidine metabolism; dUMP biosynthesis; dUMP from dCTP: step 1/1. In terms of biological role, bifunctional enzyme that catalyzes both the deamination of dCTP to dUTP and the hydrolysis of dUTP to dUMP without releasing the toxic dUTP intermediate. In Corynebacterium jeikeium (strain K411), this protein is dCTP deaminase, dUMP-forming.